Here is a 210-residue protein sequence, read N- to C-terminus: uncharacterized protein (210 aa).

The region spanning 4–180 (RKVYLYVFHT…AVEVLKKLDV (177 aa)) is the PfpI endopeptidase domain. Cysteine 110 acts as the Nucleophile in catalysis.

It belongs to the peptidase C56 family.

This is an uncharacterized protein from Bacillus subtilis (strain 168).